A 91-amino-acid polypeptide reads, in one-letter code: Acylphosphatase (91 aa).

One can recognise an Acylphosphatase-like domain in the interval 3 to 91 (TVTMKVTGLV…EKFTRFSVVY (89 aa)). Catalysis depends on residues Arg-18 and Asn-36.

The protein belongs to the acylphosphatase family.

It catalyses the reaction an acyl phosphate + H2O = a carboxylate + phosphate + H(+). This chain is Acylphosphatase (acyP), found in Lactobacillus gasseri (strain ATCC 33323 / DSM 20243 / BCRC 14619 / CIP 102991 / JCM 1131 / KCTC 3163 / NCIMB 11718 / NCTC 13722 / AM63).